The sequence spans 1172 residues: Phytochrome B (1172 aa).

The span at 1–16 (MVSGVGGSGGGRGGGR) shows a compositional bias: gly residues. The disordered stretch occupies residues 1–54 (MVSGVGGSGGGRGGGRGGEEEPSSSHTPNNRRGGEQAQSSGTKSLRPRSNTESM). The span at 24 to 54 (SSHTPNNRRGGEQAQSSGTKSLRPRSNTESM) shows a compositional bias: polar residues. The 182-residue stretch at 252–433 (DIKLLCDTVV…AFGLQLNMEL (182 aa)) folds into the GAF domain. Cys-357 provides a ligand contact to phytochromobilin. PAS domains follow at residues 652–723 (VARE…LRGD) and 786–857 (DYKA…MIVL). The Histidine kinase domain maps to 934–1153 (YICQVIKNPL…LIILELPVPR (220 aa)).

The protein belongs to the phytochrome family. Homodimer. Interacts with ADO1 and PKS4. Stabilized by interactions with PAPP5 and FYPP3 which are enhanced in the phosphorylated Pfr form. Interacts with VOZ1 and VOZ2. Binds, via its photosensory domain, to PTAC12/HMR/PAP5 when photoactivated; this interaction stimulates its localization to photobodies. Interacts with CRY1 specifically when in the dark/far-red (Pr) state, but not when red light-activated (Pfr). Interacts with PIF4 and PIF5 in response to low blue light (LBL). Component of a red light-dependent nuclear complex made of PHL, PHYB and CO. Interacts directly with PHL. Binds to UNE10/PIF8 when red light-activated (Pfr). When light-activated, interacts with PCH1 and PCHL. Associated with DRT111/RSN2/SFPS, SMP2 and SWAP1 in nuclear photobodies upon response to red light (Pfr form). Contains one covalently linked phytochromobilin chromophore. As to expression, expressed in fruits, flowers, leaves, stems, seedlings and roots.

Its subcellular location is the cytoplasm. The protein localises to the nucleus. It is found in the nucleoplasm. It localises to the nucleus speckle. Its function is as follows. Regulatory photoreceptor which exists in two forms that are reversibly interconvertible by light: the Pr form that absorbs maximally in the red region of the spectrum and the Pfr form that absorbs maximally in the far-red region. Photoconversion of Pr to Pfr induces an array of morphogenetic responses, whereas reconversion of Pfr to Pr cancels the induction of those responses. Pfr controls the expression of a number of nuclear genes including those encoding the small subunit of ribulose-bisphosphate carboxylase, chlorophyll A/B binding protein, protochlorophyllide reductase, rRNA, etc. It also controls the expression of its own gene(s) in a negative feedback fashion. Involved in the flowering time regulation. Involved in light-regulated circadian phase control that triggers stomatal aperture, stomatal conductance, and CO(2) assimilation. Implicated in red light perception, and, to a lower extent, in blue light signaling. Controls thermomorphogenesis in the daytime and regulates temperature responses by associating with the promoters of key target genes in a temperature-dependent manner and subsequently repressing their expression in a PIF4-dependent manner (temperature-responsive transcriptional regulator); this process requires PTAC12/HMR/PAP5 (transcriptional activator). Thermal timer that integrates temperature information over the course of the night. Detabilizes UNE10/PIF8 in red light. The protein is Phytochrome B of Arabidopsis thaliana (Mouse-ear cress).